The sequence spans 93 residues: Small ribosomal subunit protein uS19 (93 aa).

Belongs to the universal ribosomal protein uS19 family.

Its function is as follows. Protein S19 forms a complex with S13 that binds strongly to the 16S ribosomal RNA. The polypeptide is Small ribosomal subunit protein uS19 (Agathobacter rectalis (strain ATCC 33656 / DSM 3377 / JCM 17463 / KCTC 5835 / VPI 0990) (Eubacterium rectale)).